We begin with the raw amino-acid sequence, 554 residues long: Flavin-dependent halogenase ascD (554 aa).

Positions 15, 18, and 48 each coordinate FAD. Residues Ser-331 and Gly-332 each contribute to the chloride site. Val-333 contacts FAD.

The protein belongs to the flavin-dependent halogenase family.

It catalyses the reaction ilicicolin B + FADH2 + chloride + O2 = ilicicolin A + FAD + 2 H2O + H(+). It participates in secondary metabolite biosynthesis; terpenoid biosynthesis. Flavin-dependent halogenase; part of the asc-1 gene cluster that mediates the biosynthesis of both ascochlorin and ascofuranone, a strong inhibitor of cyanide-insensitive alternative oxidases and a promising drug candidate against African trypanosomiasis. The first step in the pathway is performed by the non-reducing polyketide synthase ascC that produces orsellinic acid by condensing acetyl-CoA with 3 malonyl-CoA units. Orsellinic acid is then prenylated by the prenyltransferase ascA to yield ilicicolinic acid B. Ilicicolinic acid B is further reduced to ilicicolin B by the reductase ascB. The halogenase ascD then chlorinates ilicicolin B to produce ilicicolin A which is converted to ilicicolin A epoxide by the cytochrome P450 monooxygenase ascE that catalyzes stereoselective epoxidation of the terminal double bond of the prenyl group. Ilicicolin A epoxide is the last common precursor for the biosynthesis of ascofuranone and ascochlorin. The terpene cyclase ascF produces a monocyclic terpene, and the cyclization reaction is proposed to be initiated by protonation of the terminal epoxide of ilicicolin A epoxide to generate a monocyclic tertiarycation, which is followed by a series of hydride and methyl shifts with abstraction of proton, leading to the formation of the (14S,15R,19R)-trimethylcyclohexanone ring structure of ilicicolin C, which is finally reduced to ascochlorin by the dehydrogenase ascG. On the other hand, ilicicolin A epoxide is hydroxylated by the cytochrome P450 monooxygenase ascH, and the resultant product is cyclized by the terpene cyclase ascI to ascofuranol via protonation-initiated epoxide ring opening, which facilitates the 6-endo-tet cyclization to form the tetrahy-drofuran ring. Finally, ascofuranol is oxidized into ascofuranone by ascJ. The protein is Flavin-dependent halogenase ascD of Acremonium egyptiacum (Oospora egyptiaca).